A 274-amino-acid chain; its full sequence is Rhamnulose-1-phosphate aldolase (274 aa).

Glu117 is a catalytic residue. Zn(2+)-binding residues include His141, His143, and His212.

It belongs to the aldolase class II family. RhaD subfamily. In terms of assembly, homotetramer. The cofactor is Zn(2+).

It localises to the cytoplasm. The enzyme catalyses L-rhamnulose 1-phosphate = (S)-lactaldehyde + dihydroxyacetone phosphate. Its pathway is carbohydrate degradation; L-rhamnose degradation; glycerone phosphate from L-rhamnose: step 3/3. Catalyzes the reversible cleavage of L-rhamnulose-1-phosphate to dihydroxyacetone phosphate (DHAP) and L-lactaldehyde. This is Rhamnulose-1-phosphate aldolase from Escherichia coli (strain SMS-3-5 / SECEC).